The sequence spans 221 residues: MVPPNPAHQPARRTQPQLQPQSQPRAQPLPGRRMNPVLCIIVALVLLGLLVGLAILITYLTLRPKRLIYTVEAASVQEFAIGNNDDHINAKFSYVIKSYNPEKHVSVRYHSMRISTAHHNQSVAHKNISPFKQRPKNETRIETQLVSHNVALSKFNARDLRAEKSKGTIEMEVYITARVSYKTWIFRSRRRTLKAVCTPVMINVTSSSLDGFQRVLCKTRL.

The tract at residues 1-30 (MVPPNPAHQPARRTQPQLQPQSQPRAQPLP) is disordered. A compositionally biased stretch (polar residues) spans 12 to 25 (RRTQPQLQPQSQPR). A helical membrane pass occupies residues 37–57 (VLCIIVALVLLGLLVGLAILI).

The protein localises to the membrane. This is an uncharacterized protein from Arabidopsis thaliana (Mouse-ear cress).